A 219-amino-acid chain; its full sequence is MGQKINPTGFRVGVIRDWDAKWYAEKDFATFLHEDLKIRKYINTKLADASVSTIEIERAANRVNVSIHTAKPGMVIGKGGSEVENLRKALNNLTGKKVHINIVEIKKPDLDAHLVGEGIARQLEARVAFRRAQRQAMQRTMRAGAKGIKTQVAGRLNGADMSRIETHAQGTVPLHTLRADIDYSWDEAMTTYGKLGVKTWIYRGEVLPAKANNNTKGGK.

In terms of domain architecture, KH type-2 spans 38 to 106 (IRKYINTKLA…KVHINIVEIK (69 aa)).

This sequence belongs to the universal ribosomal protein uS3 family. Part of the 30S ribosomal subunit. Forms a tight complex with proteins S10 and S14.

Binds the lower part of the 30S subunit head. Binds mRNA in the 70S ribosome, positioning it for translation. This chain is Small ribosomal subunit protein uS3, found in Latilactobacillus sakei subsp. sakei (strain 23K) (Lactobacillus sakei subsp. sakei).